The chain runs to 181 residues: LEM domain-containing protein 1 (181 aa).

Residues 1–45 (MVDVKCLSDCKLQNQLEKLGFSPGPILPSTRKLYEKKLVQLLVSP) enclose the LEM domain. The helical; Signal-anchor for type II membrane protein transmembrane segment at 152-172 (FPVGLKLAVLGIFIIVVFVYL) threads the bilayer.

Testis-specific. Isoform 6 is detected in 17 of 18 colon cancer tissues examined.

It localises to the membrane. This is LEM domain-containing protein 1 (LEMD1) from Homo sapiens (Human).